The following is a 112-amino-acid chain: Protein Churchill (112 aa).

The Zn(2+) site is built by Cys2, Cys5, Cys30, Cys33, His59, Cys61, Cys64, His66, His71, Cys88, and Cys91.

This sequence belongs to the Churchill family.

Its function is as follows. Transcriptional activator that mediates FGF signaling during neural development. Plays a role in the regulation of cell movement. Does not bind DNA by itself. In Bos taurus (Bovine), this protein is Protein Churchill (CHURC1).